A 346-amino-acid chain; its full sequence is uncharacterized protein (346 aa).

A signal peptide spans 1–27; that stretch reads MKFNKISLSVSTALLAAGLAVSGSANA.

This is an uncharacterized protein from Haemophilus influenzae (strain ATCC 51907 / DSM 11121 / KW20 / Rd).